A 139-amino-acid chain; its full sequence is ATP synthase epsilon chain (139 aa).

It belongs to the ATPase epsilon chain family. F-type ATPases have 2 components, CF(1) - the catalytic core - and CF(0) - the membrane proton channel. CF(1) has five subunits: alpha(3), beta(3), gamma(1), delta(1), epsilon(1). CF(0) has three main subunits: a, b and c.

It is found in the cell membrane. Functionally, produces ATP from ADP in the presence of a proton gradient across the membrane. This chain is ATP synthase epsilon chain, found in Roseiflexus sp. (strain RS-1).